Here is a 611-residue protein sequence, read N- to C-terminus: MRFQGVGLCLGLLFITVNADFMDDGVEVEDFSENSDESNIKDEPSSGTFKYKTPQPIGEVYFTETFDSGNLAGWVLSKAKKDDMDSEIAIYDGRWEIEELKENQVPGDRGLVLKSKAKHHAIAAVLEKPFIFADKPLIVQYEVNFQDGIDCGGAYIKLLADTGDLILENFYDKTSYTIMFGPDKCGEDYKLHLIFRHKHPKTGVFEEKHAKPPDVDLKEFFTDRKTHLYTLVMNPDDTFEVLIDQKVVNQGTLLDDVVPPINPPREIDDPSDKKPEEWDDRAKIPDPTAVRPEDWDENEPAQIEDSSAVKPDGWLDDEPKFIPNPKAEKPEDWSDDMDGEWEAPHIPNPACQIGCGEWKPPMIDNPKYKGIWRPPMINNPNYQGLWSPQKIPNPDYFEDDHPFLLTSFSALGLELWSMTPDIYFDNFIICSEKEVADQWATDGWELKIMVANANEPGVLRQLVIAAEERPWLWLMYLVMAGLPVALVASFCWPRKVKKKYEDTGPKKTELCKLQSKAALEQEAEEEKAPEKPEDVQEEKKPGEAEVVTVEKEVIGEPEEKSKEDRETLEGQEEVSKLSKSGSEDEMKDADESPGSGDAPLKSLRKRRVRKD.

An N-terminal signal peptide occupies residues 1–19; the sequence is MRFQGVGLCLGLLFITVNA. Residues 20–471 lie on the Lumenal side of the membrane; it reads DFMDDGVEVE…LVIAAEERPW (452 aa). Lysine 128 is modified (N6-acetyllysine). A disulfide bond links cysteine 151 and cysteine 185. Residues 254 to 335 form a disordered region; that stretch reads LDDVVPPINP…KAEKPEDWSD (82 aa). A compositionally biased stretch (basic and acidic residues) spans 265–284; it reads REIDDPSDKKPEEWDDRAKI. 8 consecutive repeat copies span residues 267–280, 284–297, 303–316, 322–335, 339–352, 356–369, 370–383, and 384–397. An interaction with PPIB region spans residues 317–350; sequence DEPKFIPNPKAEKPEDWSDDMDGEWEAPHIPNPA. A disulfide bridge links cysteine 351 with cysteine 355. A helical membrane pass occupies residues 472–492; sequence LWLMYLVMAGLPVALVASFCW. At 493–611 the chain is on the cytoplasmic side; sequence PRKVKKKYED…SLRKRRVRKD (119 aa). The disordered stretch occupies residues 517–611; the sequence is AALEQEAEEE…SLRKRRVRKD (95 aa). A compositionally biased stretch (basic and acidic residues) spans 526 to 584; sequence EKAPEKPEDVQEEKKPGEAEVVTVEKEVIGEPEEKSKEDRETLEGQEEVSKLSKSGSED. Serine 561, serine 578, serine 580, serine 582, serine 592, serine 595, and serine 602 each carry phosphoserine. Basic residues predominate over residues 602–611; that stretch reads SLRKRRVRKD.

It belongs to the calreticulin family. In terms of assembly, interacts with PDILT and PPIB. Interacts with ADAM2. Interacts with ADAM1A, ADAM1B and ADAM3; these are protein-coding genes in mouse but may be pseudogenes in other organisms. Detected in testis (at protein level). Detected in testis.

It localises to the endoplasmic reticulum membrane. Its function is as follows. Functions during spermatogenesis as a chaperone for a range of client proteins that are important for sperm adhesion onto the egg zona pellucida and for subsequent penetration of the zona pellucida. Required for normal sperm migration from the uterus into the oviduct. Required for normal male fertility. Binds calcium ions. The chain is Calmegin (Clgn) from Mus musculus (Mouse).